Consider the following 175-residue polypeptide: Colicin-B immunity protein (175 aa).

The next 3 helical transmembrane spans lie at 14–32 (ILYA…ILIL), 104–121 (CFWG…TLFY), and 149–168 (IYFT…LLVI).

The protein resides in the cell inner membrane. Functionally, this protein is able to protect a cell, which harbors the plasmid ColB encoding colicin B, against colicin B. The protein is Colicin-B immunity protein (cbi) of Escherichia coli.